Reading from the N-terminus, the 323-residue chain is 4-diphosphocytidyl-2-C-methyl-D-erythritol kinase (323 aa).

Lys25 is an active-site residue. 110 to 120 (PVAGGMAGGSA) contributes to the ATP binding site. Asp152 is an active-site residue.

This sequence belongs to the GHMP kinase family. IspE subfamily.

It carries out the reaction 4-CDP-2-C-methyl-D-erythritol + ATP = 4-CDP-2-C-methyl-D-erythritol 2-phosphate + ADP + H(+). It functions in the pathway isoprenoid biosynthesis; isopentenyl diphosphate biosynthesis via DXP pathway; isopentenyl diphosphate from 1-deoxy-D-xylulose 5-phosphate: step 3/6. Its function is as follows. Catalyzes the phosphorylation of the position 2 hydroxy group of 4-diphosphocytidyl-2C-methyl-D-erythritol. This Mycobacterium leprae (strain Br4923) protein is 4-diphosphocytidyl-2-C-methyl-D-erythritol kinase.